The sequence spans 118 residues: MICOS complex subunit MIC13 (118 aa).

At 1 to 7 (MVPRVWS) the chain is on the mitochondrial matrix side. Residues 8–26 (LMRFLIKGSVAGGAIYLVY) traverse the membrane as a helical segment. Residues 27–118 (DQDPLGPSDK…GWEYLKERTK (92 aa)) lie on the Mitochondrial intermembrane side of the membrane.

Belongs to the MICOS complex subunit Mic13 family. As to quaternary structure, component of the mitochondrial contact site and cristae organizing system (MICOS) complex, composed of at least MICOS10/MIC10, CHCHD3/MIC19, CHCHD6/MIC25, APOO/MIC26, MICOS13/MIC13, APOOL/MIC27 and IMMT/MIC60. The MICOS complex associates with mitochondrial outer membrane proteins SAMM50, MTX1 and MTX2 (together described as components of the mitochondrial outer membrane sorting assembly machinery (SAM) complex) and DNAJC11, mitochondrial inner membrane protein TMEM11 and with HSPA9. The MICOS and SAM complexes together with DNAJC11 are part of a large protein complex spanning both membranes termed the mitochondrial intermembrane space bridging (MIB) complex.

The protein localises to the mitochondrion inner membrane. Its function is as follows. Component of the MICOS complex, a large protein complex of the mitochondrial inner membrane that plays crucial roles in the maintenance of crista junctions, inner membrane architecture, and formation of contact sites to the outer membrane. Constituent of mature MICOS complex, it is required for the formation of cristae junction (CJ) and maintenance of cristae morphology. Required for the incorporation of MICOS10/MIC10 into the MICOS complex. The polypeptide is MICOS complex subunit MIC13 (Sus scrofa (Pig)).